The following is a 237-amino-acid chain: ATP synthase subunit a (237 aa).

A run of 5 helical transmembrane segments spans residues 17–37 (LSDM…AVAA), 75–95 (FLTL…LGLP), 112–132 (DATV…YYGV), 179–201 (ILLG…GAAI), and 214–234 (GTIQ…HKVS).

It belongs to the ATPase A chain family. F-type ATPases have 2 components, CF(1) - the catalytic core - and CF(0) - the membrane proton channel. CF(1) has five subunits: alpha(3), beta(3), gamma(1), delta(1), epsilon(1). CF(0) has three main subunits: a(1), b(2) and c(9-12). The alpha and beta chains form an alternating ring which encloses part of the gamma chain. CF(1) is attached to CF(0) by a central stalk formed by the gamma and epsilon chains, while a peripheral stalk is formed by the delta and b chains.

It localises to the cell membrane. Its function is as follows. Key component of the proton channel; it plays a direct role in the translocation of protons across the membrane. The chain is ATP synthase subunit a from Geobacillus kaustophilus (strain HTA426).